We begin with the raw amino-acid sequence, 589 residues long: Protein FAM161B (589 aa).

3 disordered regions span residues 1–166, 265–297, and 386–444; these read MTVG…VCSW, KKEQ…RKIP, and AERR…GLAS. Over residues 92–106 the composition is skewed to acidic residues; sequence PDSDLNDAEDEEDLE. The span at 151–166 shows a compositional bias: polar residues; sequence TSDSGPPSQHRSVCSW. Over residues 265-275 the composition is skewed to basic and acidic residues; sequence KKEQQKEDAPQ. Residues 287–297 show a composition bias toward basic residues; that stretch reads SPKKATSRKIP. Over residues 386–396 the composition is skewed to basic and acidic residues; sequence AERRETRETTR. Residues 510-577 adopt a coiled-coil conformation; it reads EEVFKAKLKE…ALKQAGLEEE (68 aa).

The protein belongs to the FAM161 family. As to quaternary structure, interacts with FAM161A.

This Mus musculus (Mouse) protein is Protein FAM161B (Fam161b).